A 403-amino-acid chain; its full sequence is RNA-binding motif, single-stranded-interacting protein 1 (403 aa).

The disordered stretch occupies residues proline 30–tryptophan 56. Over residues serine 40–serine 54 the composition is skewed to low complexity. RRM domains lie at threonine 62–glutamine 135 and threonine 141–glycine 226. Threonine 208 is subject to Phosphothreonine. The span at glycine 382–serine 395 shows a compositional bias: polar residues. The disordered stretch occupies residues glycine 382–lysine 403.

As to expression, ubiquitous. Expressed in all tissues except testis.

Its subcellular location is the nucleus. Single-stranded DNA binding protein that interacts with the region upstream of the MYC gene. Binds specifically to the DNA sequence motif 5'-[AT]CT[AT][AT]T-3'. Probably has a role in DNA replication. This Mus musculus (Mouse) protein is RNA-binding motif, single-stranded-interacting protein 1 (Rbms1).